The primary structure comprises 149 residues: Large ribosomal subunit protein bL9 (149 aa).

It belongs to the bacterial ribosomal protein bL9 family.

In terms of biological role, binds to the 23S rRNA. This Haemophilus influenzae (strain PittGG) protein is Large ribosomal subunit protein bL9.